Reading from the N-terminus, the 354-residue chain is Elongation factor Ts (354 aa).

The interval 81–84 (TDFV) is involved in Mg(2+) ion dislocation from EF-Tu.

Belongs to the EF-Ts family.

It localises to the cytoplasm. Its function is as follows. Associates with the EF-Tu.GDP complex and induces the exchange of GDP to GTP. It remains bound to the aminoacyl-tRNA.EF-Tu.GTP complex up to the GTP hydrolysis stage on the ribosome. This chain is Elongation factor Ts, found in Campylobacter curvus (strain 525.92).